Consider the following 571-residue polypeptide: Sulfite reductase [NADPH] hemoprotein beta-component (571 aa).

Residues cysteine 435, cysteine 441, cysteine 480, and cysteine 484 each contribute to the [4Fe-4S] cluster site. Position 484 (cysteine 484) interacts with siroheme.

It belongs to the nitrite and sulfite reductase 4Fe-4S domain family. Alpha(8)-beta(8). The alpha component is a flavoprotein, the beta component is a hemoprotein. Siroheme serves as cofactor. Requires [4Fe-4S] cluster as cofactor.

It catalyses the reaction hydrogen sulfide + 3 NADP(+) + 3 H2O = sulfite + 3 NADPH + 4 H(+). It participates in sulfur metabolism; hydrogen sulfide biosynthesis; hydrogen sulfide from sulfite (NADPH route): step 1/1. Functionally, component of the sulfite reductase complex that catalyzes the 6-electron reduction of sulfite to sulfide. This is one of several activities required for the biosynthesis of L-cysteine from sulfate. The sequence is that of Sulfite reductase [NADPH] hemoprotein beta-component from Serratia proteamaculans (strain 568).